A 29-amino-acid chain; its full sequence is Cytochrome b6-f complex subunit 8 (29 aa).

The chain crosses the membrane as a helical span at residues 3-23 (IITFGWVAVAAFFALSIAFVV).

Belongs to the PetN family. The 4 large subunits of the cytochrome b6-f complex are cytochrome b6, subunit IV (17 kDa polypeptide, PetD), cytochrome f and the Rieske protein, while the 4 small subunits are PetG, PetL, PetM and PetN. The complex functions as a dimer.

The protein localises to the cellular thylakoid membrane. In terms of biological role, component of the cytochrome b6-f complex, which mediates electron transfer between photosystem II (PSII) and photosystem I (PSI), cyclic electron flow around PSI, and state transitions. In Synechococcus sp. (strain JA-3-3Ab) (Cyanobacteria bacterium Yellowstone A-Prime), this protein is Cytochrome b6-f complex subunit 8.